The primary structure comprises 338 residues: Ferrochelatase (338 aa).

Residues His-189 and Glu-293 each contribute to the Fe cation site.

The protein belongs to the ferrochelatase family.

It is found in the cytoplasm. The enzyme catalyses heme b + 2 H(+) = protoporphyrin IX + Fe(2+). Its pathway is porphyrin-containing compound metabolism; protoheme biosynthesis; protoheme from protoporphyrin-IX: step 1/1. Catalyzes the ferrous insertion into protoporphyrin IX. The sequence is that of Ferrochelatase from Azotobacter vinelandii (strain DJ / ATCC BAA-1303).